The following is a 201-amino-acid chain: Recombination protein RecR (201 aa).

A C4-type zinc finger spans residues 60–75; sequence CSCCGNVDTIDPCTVC. A Toprim domain is found at 83–178; sequence AVIIVVEDVA…RITRLAHGVP (96 aa).

It belongs to the RecR family.

In terms of biological role, may play a role in DNA repair. It seems to be involved in an RecBC-independent recombinational process of DNA repair. It may act with RecF and RecO. The chain is Recombination protein RecR from Sinorhizobium medicae (strain WSM419) (Ensifer medicae).